Consider the following 468-residue polypeptide: ATP synthase subunit beta (468 aa).

Position 155–162 (155–162 (GGAGVGKT)) interacts with ATP.

It belongs to the ATPase alpha/beta chains family. F-type ATPases have 2 components, CF(1) - the catalytic core - and CF(0) - the membrane proton channel. CF(1) has five subunits: alpha(3), beta(3), gamma(1), delta(1), epsilon(1). CF(0) has three main subunits: a(1), b(2) and c(9-12). The alpha and beta chains form an alternating ring which encloses part of the gamma chain. CF(1) is attached to CF(0) by a central stalk formed by the gamma and epsilon chains, while a peripheral stalk is formed by the delta and b chains.

The protein resides in the cell membrane. The enzyme catalyses ATP + H2O + 4 H(+)(in) = ADP + phosphate + 5 H(+)(out). Functionally, produces ATP from ADP in the presence of a proton gradient across the membrane. The catalytic sites are hosted primarily by the beta subunits. The polypeptide is ATP synthase subunit beta (Streptococcus pneumoniae (strain Taiwan19F-14)).